The following is a 545-amino-acid chain: MTELTQQATWQALEKHSKTLSHMRELFSTEPQRFNDMSTQACGLFLDYSKNRASQETMSLLFKLAKDTQLESKIKAMFAGEAINNTEQRAVLHTALRAPADKVIIVDGNNIVAEVQQTLAKMSEFVESLTSGSWKGYTGKAITDVVSIGIGGSFLGPKIVSQALRPYWTGELNCHFVANVDGTSITEKLKGLDPQTTLFVMSSKSFGTQETLTNTLTAKAWFLGQGASQSDVAKHFVAVSSNVAKATEFGIDADNIFPMWDWVGGRYSLWSAIGLPIALLIGMDNFRELLAGAHEMDEHFANTPLEDNMPVIMGLFSLWYGNFFNAQSHVVLTYDHYLRGLPAYFQQLDMESNGKSVTLNGTDVDYSTGPVIWGGEGTNGQHAYHQLLHQGTALIPADFIMPLNSHNPVGEHHVQLASNCFGQTQALMQGRTYEEALAELSSSSLNDEQKQLIAKHKVMPGNKPSNTILMDKLTPSTLGALIALYEHRTFVQGAIWQINSFDQWGVELGKQLGNDVLDRLTASKDADELDTSSNGLINLFRQGNI.

The active-site Proton donor is the E351. Active-site residues include H382 and K510.

Belongs to the GPI family.

The protein resides in the cytoplasm. It carries out the reaction alpha-D-glucose 6-phosphate = beta-D-fructose 6-phosphate. It participates in carbohydrate biosynthesis; gluconeogenesis. Its pathway is carbohydrate degradation; glycolysis; D-glyceraldehyde 3-phosphate and glycerone phosphate from D-glucose: step 2/4. In terms of biological role, catalyzes the reversible isomerization of glucose-6-phosphate to fructose-6-phosphate. The chain is Glucose-6-phosphate isomerase from Shewanella halifaxensis (strain HAW-EB4).